We begin with the raw amino-acid sequence, 131 residues long: Small ribosomal subunit protein bS6 (131 aa).

The disordered stretch occupies residues 98-131 (EASPMVKAKDERRERRDDFANETADDAEAGDSEE). Residues 104-116 (KAKDERRERRDDF) are compositionally biased toward basic and acidic residues. Positions 120-131 (TADDAEAGDSEE) are enriched in acidic residues.

Belongs to the bacterial ribosomal protein bS6 family.

Its function is as follows. Binds together with bS18 to 16S ribosomal RNA. This chain is Small ribosomal subunit protein bS6, found in Salmonella dublin (strain CT_02021853).